We begin with the raw amino-acid sequence, 159 residues long: ATP synthase subunit b (159 aa).

The chain crosses the membrane as a helical span at residues 2–22 (NISIPQIIAAILNFIILLLIV).

The protein belongs to the ATPase B chain family. As to quaternary structure, F-type ATPases have 2 components, F(1) - the catalytic core - and F(0) - the membrane proton channel. F(1) has five subunits: alpha(3), beta(3), gamma(1), delta(1), epsilon(1). F(0) has three main subunits: a(1), b(2) and c(10-14). The alpha and beta chains form an alternating ring which encloses part of the gamma chain. F(1) is attached to F(0) by a central stalk formed by the gamma and epsilon chains, while a peripheral stalk is formed by the delta and b chains.

It localises to the cell membrane. Functionally, f(1)F(0) ATP synthase produces ATP from ADP in the presence of a proton or sodium gradient. F-type ATPases consist of two structural domains, F(1) containing the extramembraneous catalytic core and F(0) containing the membrane proton channel, linked together by a central stalk and a peripheral stalk. During catalysis, ATP synthesis in the catalytic domain of F(1) is coupled via a rotary mechanism of the central stalk subunits to proton translocation. Its function is as follows. Component of the F(0) channel, it forms part of the peripheral stalk, linking F(1) to F(0). This chain is ATP synthase subunit b, found in Clostridium botulinum (strain Loch Maree / Type A3).